A 151-amino-acid polypeptide reads, in one-letter code: Minor capsid protein P12 (151 aa).

Hydrophobic regions lie at residues 23–43 (FIFF…YTIY) and 46–66 (VQNT…IWNF). Cys112 and Cys120 are joined by a disulfide.

Interacts with the major capsid protein.

Its subcellular location is the virion. One of the minor capsid proteins that constitute a network internal to the major capsid proteins and outside the lipid membrane. The minor capsid protein P12 does not serve a cross-linking function between neighboring capsomers, it may play a role in the viral capsid assembly. This Paramecium bursaria Chlorella virus 1 (PBCV-1) protein is Minor capsid protein P12.